Consider the following 600-residue polypeptide: UvrABC system protein C (600 aa).

The 86-residue stretch at 15–100 folds into the GIY-YIG domain; the sequence is NSAGVYQYFN…IKQLHPKYNI (86 aa). A UVR domain is found at 203–238; sequence SILIKNLEKQMLVLAQNENYEEAAKVRDQIVTIKDL.

The protein belongs to the UvrC family. In terms of assembly, interacts with UvrB in an incision complex.

The protein resides in the cytoplasm. In terms of biological role, the UvrABC repair system catalyzes the recognition and processing of DNA lesions. UvrC both incises the 5' and 3' sides of the lesion. The N-terminal half is responsible for the 3' incision and the C-terminal half is responsible for the 5' incision. This Campylobacter jejuni subsp. jejuni serotype O:23/36 (strain 81-176) protein is UvrABC system protein C.